The primary structure comprises 724 residues: Phenylalanine ammonia-lyase (724 aa).

The active-site Proton donor/acceptor is the Tyr-99. The segment at residues 204-206 (ASG) is a cross-link (5-imidazolinone (Ala-Gly)). Ser-205 carries the post-translational modification 2,3-didehydroalanine (Ser). Positions 265, 355, 361, 391, 462, 490, and 493 each coordinate (E)-cinnamate.

It belongs to the PAL/histidase family. Homotetramer. In terms of processing, contains an active site 4-methylidene-imidazol-5-one (MIO), which is formed autocatalytically by cyclization and dehydration of residues Ala-Ser-Gly.

It localises to the cytoplasm. It catalyses the reaction L-phenylalanine = (E)-cinnamate + NH4(+). It participates in phenylpropanoid metabolism; trans-cinnamate biosynthesis; trans-cinnamate from L-phenylalanine: step 1/1. In terms of biological role, catalyzes the non-oxidative deamination of L-phenylalanine to form trans-cinnamic acid and a free ammonium ion. Facilitates the commitment step in phenylpropanoid pathways that produce secondary metabolites such as lignins, coumarins and flavonoids. In Flammulina velutipes (Agaricus velutipes), this protein is Phenylalanine ammonia-lyase.